Here is a 191-residue protein sequence, read N- to C-terminus: Ion-translocating oxidoreductase complex subunit B (191 aa).

A hydrophobic region spans residues methionine 1–alanine 26. One can recognise a 4Fe-4S domain in the interval glutamate 32–valine 90. [4Fe-4S] cluster contacts are provided by cysteine 49, cysteine 52, cysteine 57, cysteine 73, cysteine 114, cysteine 117, cysteine 120, cysteine 124, cysteine 144, cysteine 147, cysteine 150, and cysteine 154. 4Fe-4S ferredoxin-type domains follow at residues methionine 105–arginine 134 and glutamine 135–valine 164.

The protein belongs to the 4Fe4S bacterial-type ferredoxin family. RnfB subfamily. In terms of assembly, the complex is composed of six subunits: RnfA, RnfB, RnfC, RnfD, RnfE and RnfG. [4Fe-4S] cluster serves as cofactor.

The protein localises to the cell inner membrane. In terms of biological role, part of a membrane-bound complex that couples electron transfer with translocation of ions across the membrane. The sequence is that of Ion-translocating oxidoreductase complex subunit B from Ectopseudomonas mendocina (strain ymp) (Pseudomonas mendocina).